The chain runs to 106 residues: Small ribosomal subunit protein mS33 (106 aa).

N-acetylserine is present on S2. Residues 81–106 form a disordered region; that stretch reads EQRRLKKLRGKGKPRKGEGKRATKKK. The span at 84-94 shows a compositional bias: basic residues; sequence RLKKLRGKGKP. Positions 95-106 are enriched in basic and acidic residues; sequence RKGEGKRATKKK.

It belongs to the mitochondrion-specific ribosomal protein mS33 family. In terms of assembly, component of the mitochondrial ribosome small subunit (28S) which comprises a 12S rRNA and about 30 distinct proteins.

It is found in the mitochondrion. This chain is Small ribosomal subunit protein mS33 (Mrps33), found in Mus musculus (Mouse).